Consider the following 383-residue polypeptide: G-protein coupled receptor E1 (383 aa).

A run of 9 helical transmembrane segments spans residues 13–35, 78–98, 109–129, 160–180, 190–210, 242–262, 279–299, 323–343, and 351–371; these read SSLA…TTIA, LYLL…IIVI, MLLL…PFWM, VFCI…AVTA, IVTC…EFFF, VIML…YVII, LIFV…IVLL, LITK…YAFV, and LYHF…PFLS. Residues Cys-145 and Cys-222 are joined by a disulfide bond.

It belongs to the G-protein coupled receptor 1 family.

It is found in the host membrane. The protein is G-protein coupled receptor E1 (E1) of Equine herpesvirus 2 (strain 86/87) (EHV-2).